The following is a 386-amino-acid chain: Methionine aminotransferase (386 aa).

Position 236 is an N6-(pyridoxal phosphate)lysine (Lys-236).

The protein belongs to the class-I pyridoxal-phosphate-dependent aminotransferase family. As to quaternary structure, homodimer. Pyridoxal 5'-phosphate is required as a cofactor.

Its subcellular location is the cytoplasm. It catalyses the reaction a 2-oxocarboxylate + L-methionine = 4-methylsulfanyl-2-oxobutanoate + an L-alpha-amino acid. Functionally, shows aminotransferase activity with methionine and histidine as substrates, and to a lesser extent also with phenylalanine. The polypeptide is Methionine aminotransferase (ybdL) (Escherichia coli (strain K12)).